Reading from the N-terminus, the 298-residue chain is uncharacterized protein (298 aa).

Residues T43 and Y105 each act as charge relay system in the active site. The Proton donor role is filled by Y131. The Schiff-base intermediate with substrate role is filled by K159.

It belongs to the DapA family. Homotetramer.

The protein localises to the cytoplasm. This is an uncharacterized protein from Pyrococcus furiosus (strain ATCC 43587 / DSM 3638 / JCM 8422 / Vc1).